The chain runs to 485 residues: Protein hunchback (485 aa).

Residues 1–77 form a disordered region; it reads TSSTARKTPE…EEDDDIRTPK (77 aa). A compositionally biased stretch (polar residues) spans 16–37; it reads QDQNQLLKTPIQTNGNQQSTFD. Over residues 59 to 72 the composition is skewed to acidic residues; it reads ADVDDENDAEEDDD. C2H2-type zinc fingers lie at residues 87-109, 116-138, 144-166, and 172-196; these read YKCK…NRIH, LKCQ…LRNH, FQCK…MKSH, and YRCK…KYSH. 3 disordered regions span residues 229 to 270, 318 to 361, and 398 to 422; these read KDEG…PPSS, NGWQ…QVKH, and PKPV…EDDS. A compositionally biased stretch (polar residues) spans 257 to 270; it reads NFEQSQHVPTPPSS. Residues 325–335 show a composition bias toward acidic residues; it reads NCNEEETPEKE. Polar residues predominate over residues 345 to 358; the sequence is DLSSNPSTPSTVSQ. A compositionally biased stretch (low complexity) spans 402–416; the sequence is QLQLPTSSTTTPLKT. C2H2-type zinc fingers lie at residues 432–454 and 460–484; these read YECK…MGYH and FKCN…RDAH.

The protein belongs to the hunchback C2H2-type zinc-finger protein family.

It is found in the nucleus. In terms of biological role, gap class segmentation protein that controls development of head structures. In Clogmia albipunctata (Mothmidge), this protein is Protein hunchback (hb).